The sequence spans 202 residues: Crossover junction endodeoxyribonuclease RuvC (202 aa).

Residues Asp-7, Glu-68, and Asp-141 contribute to the active site. Mg(2+)-binding residues include Asp-7, Glu-68, and Asp-141.

The protein belongs to the RuvC family. As to quaternary structure, homodimer which binds Holliday junction (HJ) DNA. The HJ becomes 2-fold symmetrical on binding to RuvC with unstacked arms; it has a different conformation from HJ DNA in complex with RuvA. In the full resolvosome a probable DNA-RuvA(4)-RuvB(12)-RuvC(2) complex forms which resolves the HJ. Mg(2+) serves as cofactor.

It is found in the cytoplasm. The enzyme catalyses Endonucleolytic cleavage at a junction such as a reciprocal single-stranded crossover between two homologous DNA duplexes (Holliday junction).. Functionally, the RuvA-RuvB-RuvC complex processes Holliday junction (HJ) DNA during genetic recombination and DNA repair. Endonuclease that resolves HJ intermediates. Cleaves cruciform DNA by making single-stranded nicks across the HJ at symmetrical positions within the homologous arms, yielding a 5'-phosphate and a 3'-hydroxyl group; requires a central core of homology in the junction. The consensus cleavage sequence is 5'-(A/T)TT(C/G)-3'. Cleavage occurs on the 3'-side of the TT dinucleotide at the point of strand exchange. HJ branch migration catalyzed by RuvA-RuvB allows RuvC to scan DNA until it finds its consensus sequence, where it cleaves and resolves the cruciform DNA. The chain is Crossover junction endodeoxyribonuclease RuvC from Clavibacter michiganensis subsp. michiganensis (strain NCPPB 382).